Reading from the N-terminus, the 419-residue chain is UDP-N-acetylglucosamine 1-carboxyvinyltransferase (419 aa).

22-23 (KN) contributes to the phosphoenolpyruvate binding site. Arg-95 is a UDP-N-acetyl-alpha-D-glucosamine binding site. Cys-119 acts as the Proton donor in catalysis. At Cys-119 the chain carries 2-(S-cysteinyl)pyruvic acid O-phosphothioketal. The UDP-N-acetyl-alpha-D-glucosamine site is built by Asp-308 and Ile-330.

It belongs to the EPSP synthase family. MurA subfamily.

Its subcellular location is the cytoplasm. It carries out the reaction phosphoenolpyruvate + UDP-N-acetyl-alpha-D-glucosamine = UDP-N-acetyl-3-O-(1-carboxyvinyl)-alpha-D-glucosamine + phosphate. It functions in the pathway cell wall biogenesis; peptidoglycan biosynthesis. Functionally, cell wall formation. Adds enolpyruvyl to UDP-N-acetylglucosamine. The sequence is that of UDP-N-acetylglucosamine 1-carboxyvinyltransferase from Rickettsia bellii (strain OSU 85-389).